Consider the following 267-residue polypeptide: Carboxy-S-adenosyl-L-methionine synthase (267 aa).

Residues 1 to 11 (MPNRDTQSQND) are compositionally biased toward polar residues. The segment at 1–25 (MPNRDTQSQNDTPRHSPEAAEPQRD) is disordered. The span at 12 to 24 (TPRHSPEAAEPQR) shows a compositional bias: basic and acidic residues. S-adenosyl-L-methionine-binding positions include tyrosine 59, 84–86 (GCS), 109–110 (DN), 137–138 (DI), asparagine 152, and arginine 219.

Belongs to the class I-like SAM-binding methyltransferase superfamily. Cx-SAM synthase family. In terms of assembly, homodimer.

It carries out the reaction prephenate + S-adenosyl-L-methionine = carboxy-S-adenosyl-L-methionine + 3-phenylpyruvate + H2O. In terms of biological role, catalyzes the conversion of S-adenosyl-L-methionine (SAM) to carboxy-S-adenosyl-L-methionine (Cx-SAM). This chain is Carboxy-S-adenosyl-L-methionine synthase, found in Yersinia pseudotuberculosis serotype O:1b (strain IP 31758).